The following is a 365-amino-acid chain: tRNA-specific 2-thiouridylase MnmA (365 aa).

ATP contacts are provided by residues 9–16 (GLSGGVDS) and Met35. Residues 95–97 (NPD) are interaction with target base in tRNA. The active-site Nucleophile is Cys100. Cysteines 100 and 196 form a disulfide. Gly124 is an ATP binding site. The segment at 146–148 (KDQ) is interaction with tRNA. Cys196 (cysteine persulfide intermediate) is an active-site residue. The interval 315–316 (RY) is interaction with tRNA.

This sequence belongs to the MnmA/TRMU family.

It is found in the cytoplasm. The enzyme catalyses S-sulfanyl-L-cysteinyl-[protein] + uridine(34) in tRNA + AH2 + ATP = 2-thiouridine(34) in tRNA + L-cysteinyl-[protein] + A + AMP + diphosphate + H(+). Catalyzes the 2-thiolation of uridine at the wobble position (U34) of tRNA, leading to the formation of s(2)U34. The sequence is that of tRNA-specific 2-thiouridylase MnmA from Dechloromonas aromatica (strain RCB).